The chain runs to 293 residues: Elongation factor Ts (293 aa).

The tract at residues 80 to 83 (TDFV) is involved in Mg(2+) ion dislocation from EF-Tu.

Belongs to the EF-Ts family.

It localises to the cytoplasm. Associates with the EF-Tu.GDP complex and induces the exchange of GDP to GTP. It remains bound to the aminoacyl-tRNA.EF-Tu.GTP complex up to the GTP hydrolysis stage on the ribosome. The sequence is that of Elongation factor Ts from Herminiimonas arsenicoxydans.